A 714-amino-acid polypeptide reads, in one-letter code: Developmentally-regulated protein kinase 1 (714 aa).

Disordered regions lie at residues 88–122 and 174–266; these read NNNI…NNFN and CNMI…IINN. Composition is skewed to low complexity over residues 174–200, 209–227, and 240–266; these read CNMI…NNNN, PSSN…TTSS, and NFNQ…IINN. A Protein kinase domain is found at 334–589; it reads FNFYGSLGSG…SCSIRNHKWF (256 aa). Residues 340–348 and Lys363 each bind ATP; that span reads LGSGSFGTA. Asp457 acts as the Proton acceptor in catalysis. Thr488 carries the phosphothreonine modification.

This sequence belongs to the protein kinase superfamily. AGC Ser/Thr protein kinase family.

The catalysed reaction is L-seryl-[protein] + ATP = O-phospho-L-seryl-[protein] + ADP + H(+). It carries out the reaction L-threonyl-[protein] + ATP = O-phospho-L-threonyl-[protein] + ADP + H(+). This Dictyostelium discoideum (Social amoeba) protein is Developmentally-regulated protein kinase 1 (pkaD).